The primary structure comprises 181 residues: Adenine phosphoribosyltransferase (181 aa).

The protein belongs to the purine/pyrimidine phosphoribosyltransferase family. In terms of assembly, homodimer.

The protein localises to the cytoplasm. The catalysed reaction is AMP + diphosphate = 5-phospho-alpha-D-ribose 1-diphosphate + adenine. The protein operates within purine metabolism; AMP biosynthesis via salvage pathway; AMP from adenine: step 1/1. Catalyzes a salvage reaction resulting in the formation of AMP, that is energically less costly than de novo synthesis. This Methylorubrum populi (strain ATCC BAA-705 / NCIMB 13946 / BJ001) (Methylobacterium populi) protein is Adenine phosphoribosyltransferase.